A 361-amino-acid polypeptide reads, in one-letter code: tRNA-specific 2-thiouridylase MnmA (361 aa).

ATP-binding positions include Gly-8–Ser-15 and Met-34. Positions Asn-94–Asp-96 are interaction with target base in tRNA. Catalysis depends on Cys-99, which acts as the Nucleophile. A disulfide bond links Cys-99 and Cys-195. Gly-123 contacts ATP. Residues Lys-145–Gln-147 are interaction with tRNA. The active-site Cysteine persulfide intermediate is Cys-195. Positions Arg-307–Tyr-308 are interaction with tRNA.

The protein belongs to the MnmA/TRMU family.

Its subcellular location is the cytoplasm. It carries out the reaction S-sulfanyl-L-cysteinyl-[protein] + uridine(34) in tRNA + AH2 + ATP = 2-thiouridine(34) in tRNA + L-cysteinyl-[protein] + A + AMP + diphosphate + H(+). Functionally, catalyzes the 2-thiolation of uridine at the wobble position (U34) of tRNA, leading to the formation of s(2)U34. In Legionella pneumophila (strain Paris), this protein is tRNA-specific 2-thiouridylase MnmA.